We begin with the raw amino-acid sequence, 61 residues long: Small ribosomal subunit protein uS14B (61 aa).

Residues Cys-24, Cys-27, Cys-40, and Cys-43 each coordinate Zn(2+).

Belongs to the universal ribosomal protein uS14 family. Zinc-binding uS14 subfamily. Part of the 30S ribosomal subunit. Contacts proteins S3 and S10. Zn(2+) serves as cofactor.

Binds 16S rRNA, required for the assembly of 30S particles and may also be responsible for determining the conformation of the 16S rRNA at the A site. In Streptomyces avermitilis (strain ATCC 31267 / DSM 46492 / JCM 5070 / NBRC 14893 / NCIMB 12804 / NRRL 8165 / MA-4680), this protein is Small ribosomal subunit protein uS14B.